Here is an 85-residue protein sequence, read N- to C-terminus: Oxytocin-neurophysin 1 (85 aa).

The residue at position 3 (Gly-3) is a Glycine amide. Disulfide bonds link Cys-16-Cys-60, Cys-19-Cys-33, Cys-27-Cys-50, Cys-34-Cys-40, Cys-67-Cys-79, and Cys-80-Cys-85.

Belongs to the vasopressin/oxytocin family. Interacts with oxytocin receptor (Ki=1.5 nM). Interacts with vasopressin V1aR/AVPR1A (Ki=37 nM), V1bR/AVPR1B (Ki=222 nM), and V2R/AVPR2 receptors (Ki=823 nM).

Functionally, neurophysin 1 specifically binds oxytocin. Oxytocin causes contraction of the smooth muscle of the uterus and of the mammary gland. Acts by binding to oxytocin receptor (OXTR). The chain is Oxytocin-neurophysin 1 (OXT) from Papio hamadryas (Hamadryas baboon).